An 894-amino-acid chain; its full sequence is MANIDPYRTEEELVEDDEEVDMSFLPPFAKGTENEVLYVENARMERRLERTERALETNMDRLHIMDEHLKNVQQELKYTQTRVEAKNKEIESEKHLNAMAEREMGRLKKDIGKMEAERQELADKINGLQNQIYKNNEKLDQFKMLMNWNQEELEQWALAERQKAEDNAALEKYRHADDGKVKELTLALERVSKQVVGRKEELEAEVVETQAAQIQLDKAAEDFRKLHVERQDLIRQWEEAVEAMRHRDAAIAAASEQFAMQKDVLRERKRELDAQARFLENETLNTKEADARVAYYEREVGKQRDVLAREQARTEELNNQVELVKATLSKAATELAQRTVENKQAREDLDAKRQKLDAARKRFVVLKRKLENEFGNLDSMEAKASELEAMRRGEEARLKAILKEHELLKKEQYKRSQVLFDLRQKERELISEISGGQGQNKNLAARIHALDEQVVARAGGVRSEEETRALNARIEKLTAILEGVKRAEDDLLAARRANTSLRADRAKLDETISTLKLENDMVSRQVKGSVEAREKALVDHDVLALEVKRLRDILAAHADEVFSLENRKQQLALSMEERKQEVEVHRDGLRAELRLLREDVHRITLELKERLLRCEKLQAKFEIISAKHRGSGEDDGEERTQAYYVIKAAQEREALQREGDDLDGRIRVAEKEVAALEATLAQLMAVNTNFAASYKKVGSKEAFEERAALRDKLDKAYDKLKARRADEAAIAGDIQVSEARLSNLGQEQRSLQALVDDMTRRKAEAQRQLDEQREKLGRALGRTDKLRQKLGLANSPQGADVELAEVRDVTRAMLLELKALALANPGAMIAEACEAAGIRLPSGGSNPPSLGGSRPGSARSQTSLGSVRSARSVASQQRGGMGGSPAVRTIQLGA.

Coiled-coil stretches lie at residues 32-143 (TENE…DQFK), 187-411 (ALER…LKKE), 461-609 (VRSE…ELKE), and 647-788 (KAAQ…KLRQ). Residues 844 to 857 (GSNPPSLGGSRPGS) are compositionally biased toward low complexity. Residues 844–894 (GSNPPSLGGSRPGSARSQTSLGSVRSARSVASQQRGGMGGSPAVRTIQLGA) form a disordered region.

Belongs to the CCDC39 family. In terms of assembly, interacts with CCDC40/FAP172. Phosphorylated in flagella.

Its subcellular location is the cell projection. The protein resides in the cilium. The protein localises to the flagellum. Its function is as follows. Required for assembly of dynein regulatory complex (DRC) and inner dynein arm complexes, which are responsible for ciliary beat regulation, by acting as a molecular ruler that determines the 96 nanometer (nm) repeat length and arrangements of components in cilia and flagella. Together with CCDC40/FAP172 forms a 96-nm-long complex in flagella. This complex does not act as a physical ruler, but rather act as a negative regulator for radial spokes: the complex lays along specific protofilaments, masking radial spoke binding sites and allowing recruitment of inner dynein arm (IDA) and nexin-dynein regulatory complexes (N-DRC). The protein is Coiled-coil domain-containing protein 39 (CCDC39) of Chlamydomonas reinhardtii (Chlamydomonas smithii).